Here is a 1160-residue protein sequence, read N- to C-terminus: GPI inositol-deacylase (1160 aa).

A disordered region spans residues 1-92 (MHRRSSGSPV…DPRSSSAAMP (92 aa)). Positions 57 to 92 (GASTPRSRNSSTWRMPSSATTTLLPPDPRSSSAAMP) are enriched in polar residues. An N-linked (GlcNAc...) asparagine glycan is attached at asparagine 65. The helical transmembrane segment at 120 to 140 (PCSILTALTSLLASLFLCAIL) threads the bilayer. The active site involves serine 307. Transmembrane regions (helical) follow at residues 786 to 806 (LVMR…ALVL) and 832 to 852 (SSLP…ATSS). N-linked (GlcNAc...) asparagine glycosylation occurs at asparagine 866. 2 helical membrane-spanning segments follow: residues 886–906 (AFFW…CVIL) and 973–993 (ILLL…VACI). An N-linked (GlcNAc...) asparagine glycan is attached at asparagine 1019. 4 helical membrane passes run 1023 to 1043 (SIFI…LVWA), 1060 to 1080 (VLSI…TMIP), 1092 to 1112 (LILF…AYLL), and 1115 to 1135 (LANI…GFSV).

Belongs to the GPI inositol-deacylase family.

The protein resides in the endoplasmic reticulum membrane. Its function is as follows. Involved in inositol deacylation of GPI-anchored proteins which plays important roles in the quality control and ER-associated degradation of GPI-anchored proteins. The chain is GPI inositol-deacylase (bst1) from Aspergillus terreus (strain NIH 2624 / FGSC A1156).